The following is a 715-amino-acid chain: DNA ligase (715 aa).

NAD(+) is bound by residues 47–51, 96–97, and glutamate 128; these read DADYD and SL. Catalysis depends on lysine 130, which acts as the N6-AMP-lysine intermediate. Arginine 151, glutamate 188, lysine 306, and lysine 330 together coordinate NAD(+). Residues cysteine 435, cysteine 438, cysteine 453, and cysteine 459 each coordinate Zn(2+). In terms of domain architecture, BRCT spans 637-715; it reads RRDTAVAGKT…EDEWLALIGN (79 aa).

Belongs to the NAD-dependent DNA ligase family. LigA subfamily. Mg(2+) serves as cofactor. The cofactor is Mn(2+).

It carries out the reaction NAD(+) + (deoxyribonucleotide)n-3'-hydroxyl + 5'-phospho-(deoxyribonucleotide)m = (deoxyribonucleotide)n+m + AMP + beta-nicotinamide D-nucleotide.. DNA ligase that catalyzes the formation of phosphodiester linkages between 5'-phosphoryl and 3'-hydroxyl groups in double-stranded DNA using NAD as a coenzyme and as the energy source for the reaction. It is essential for DNA replication and repair of damaged DNA. The protein is DNA ligase of Rhodopseudomonas palustris (strain ATCC BAA-98 / CGA009).